We begin with the raw amino-acid sequence, 130 residues long: MPTIQQLIRSARKKVSKKTKAPALKSCAQRRGICLRVYTVTPKKPNSALRKVARVRLTSGFEVTAYIPGIGHNLQEHAVVLVRGGRVKDLPGVRYHIVRGTLDTAGVKNRVQSRSKYGVKLAATKAAAKK.

It belongs to the universal ribosomal protein uS12 family. In terms of assembly, part of the 30S ribosomal subunit.

It localises to the plastid. The protein resides in the chloroplast. In terms of biological role, with S4 and S5 plays an important role in translational accuracy. Located at the interface of the 30S and 50S subunits. The chain is Small ribosomal subunit protein uS12c (rps12) from Tetradesmus obliquus (Green alga).